The chain runs to 249 residues: MPVISMKQLLEAGVHFGHQTRRWNPKMKKYIFTERNGIYIIDLQKTVKKVDEAFNFMREVASDNGTILFVGTKKQAQESVRDEAIRSGQYFVNHRWLGGTLTNFETIQKRIQHLKKIERMEADGTFEVLPKKEVVLLKKEQEKLERFLGGIKDMKGLPDALFIVDPRKERIAVAEARKLHIPIIGIVDTNCDPDEIDYVIPANDDAIRAVKLLTAKMADAIIEVNQGEELTEAEVAPVEEKATEETTEA.

Belongs to the universal ribosomal protein uS2 family.

The polypeptide is Small ribosomal subunit protein uS2 (Listeria monocytogenes serovar 1/2a (strain ATCC BAA-679 / EGD-e)).